Consider the following 412-residue polypeptide: MLTKQTLLAFVGALALATGTTTTEETPTQAEIDAARATALPYSPVSNVKGLAFDRFVNIWLENTDFEPAALDENLSKLAKEGILLTNYFAISHPSQPNYCASAGGDTFGMDNDDFLQIPSNVSTIADLFDTKHISWGEYQEDMPYAGYQGKRYPLSGPNQYVRKHNPLVLFNSVTDDAVRPRQIKNFTTFYDDLKHHSLPQHMFITPNMTNDAHDTNITVAGNWVDRFLSPLLKNEYFTKDSLVLLTFDEGDTYSYPNRVFSFLVGGAIPEHLKGTTDDTFYTHYSIVASLSANWGLPSLGRWDCGANLLKMVADKTGYVNWEVDTSNVYLNETYPGPMSTDNYSSKWAVPATKGKCSAGHGIAEVVKNTYHGLQPTYDYASPVPYDVTSGNNVGIKYHRTLVCILSCSSLS.

An N-terminal signal peptide occupies residues 1-19 (MLTKQTLLAFVGALALATG). 4 N-linked (GlcNAc...) asparagine glycosylation sites follow: Asn-74, Asn-121, Asn-186, and Asn-208. Catalysis depends on Asp-215, which acts as the Proton donor. Asn-217, Asn-332, and Asn-343 each carry an N-linked (GlcNAc...) asparagine glycan.

The N-terminus is blocked.

Its subcellular location is the secreted. The enzyme catalyses a phosphate monoester + H2O = an alcohol + phosphate. This Penicillium chrysogenum (Penicillium notatum) protein is Phosphate-repressible acid phosphatase (PHOA).